The following is a 271-amino-acid chain: 1,4-dihydroxy-2-naphthoyl-CoA synthase (271 aa).

Residues 71 to 75 (SGGDQ), Y83, 115 to 119 (YAIGG), T141, S147, Y244, and K259 each bind substrate. 140-142 (QTG) is a binding site for hydrogencarbonate. A compositionally biased stretch (basic and acidic residues) spans 250–263 (KEGRDSFKEKRKPD). The interval 250–271 (KEGRDSFKEKRKPDFGQFPRFP) is disordered.

The protein belongs to the enoyl-CoA hydratase/isomerase family. MenB subfamily. The cofactor is hydrogencarbonate.

It carries out the reaction 2-succinylbenzoyl-CoA + H(+) = 1,4-dihydroxy-2-naphthoyl-CoA + H2O. It participates in quinol/quinone metabolism; 1,4-dihydroxy-2-naphthoate biosynthesis; 1,4-dihydroxy-2-naphthoate from chorismate: step 6/7. It functions in the pathway quinol/quinone metabolism; menaquinone biosynthesis. Converts o-succinylbenzoyl-CoA (OSB-CoA) to 1,4-dihydroxy-2-naphthoyl-CoA (DHNA-CoA). In Bacillus subtilis (strain 168), this protein is 1,4-dihydroxy-2-naphthoyl-CoA synthase.